Consider the following 284-residue polypeptide: Acetylglutamate kinase (284 aa).

Residues 64–65 (GG), R86, and N181 each bind substrate.

Belongs to the acetylglutamate kinase family. ArgB subfamily.

Its subcellular location is the cytoplasm. It catalyses the reaction N-acetyl-L-glutamate + ATP = N-acetyl-L-glutamyl 5-phosphate + ADP. It functions in the pathway amino-acid biosynthesis; L-arginine biosynthesis; N(2)-acetyl-L-ornithine from L-glutamate: step 2/4. Catalyzes the ATP-dependent phosphorylation of N-acetyl-L-glutamate. The protein is Acetylglutamate kinase of Nitratiruptor sp. (strain SB155-2).